Here is a 138-residue protein sequence, read N- to C-terminus: Acyl carrier protein 1, chloroplastic (138 aa).

The transit peptide at 1–56 directs the protein to the chloroplast; the sequence is MASLSATTTVRVQPSSSSLHKLSQGNGRCSSIVCLDWGKSSFPTLRTSRRRSFISA. One can recognise a Carrier domain in the interval 59–134; the sequence is KETIDKVCDI…QAADVIESLL (76 aa). Position 94 is an O-(pantetheine 4'-phosphoryl)serine (S94).

This sequence belongs to the acyl carrier protein (ACP) family. Post-translationally, 4'-phosphopantetheine is transferred from CoA to a specific serine of apo-ACP by acpS. This modification is essential for activity because fatty acids are bound in thioester linkage to the sulfhydryl of the prosthetic group.

The protein localises to the plastid. It is found in the chloroplast. It functions in the pathway lipid metabolism; fatty acid biosynthesis. Its function is as follows. Carrier of the growing fatty acid chain in fatty acid biosynthesis. This is Acyl carrier protein 1, chloroplastic (ACL1.1) from Spinacia oleracea (Spinach).